The following is a 491-amino-acid chain: Protein nucleotidyltransferase YdiU (491 aa).

8 residues coordinate ATP: Gly-92, Gly-94, Arg-95, Lys-115, Asp-127, Gly-128, Arg-178, and Arg-185. The active-site Proton acceptor is the Asp-254. The Mg(2+) site is built by Asn-255 and Asp-264. An ATP-binding site is contributed by Asp-264.

Belongs to the SELO family. Requires Mg(2+) as cofactor. Mn(2+) is required as a cofactor.

It carries out the reaction L-seryl-[protein] + ATP = 3-O-(5'-adenylyl)-L-seryl-[protein] + diphosphate. The enzyme catalyses L-threonyl-[protein] + ATP = 3-O-(5'-adenylyl)-L-threonyl-[protein] + diphosphate. It catalyses the reaction L-tyrosyl-[protein] + ATP = O-(5'-adenylyl)-L-tyrosyl-[protein] + diphosphate. The catalysed reaction is L-histidyl-[protein] + UTP = N(tele)-(5'-uridylyl)-L-histidyl-[protein] + diphosphate. It carries out the reaction L-seryl-[protein] + UTP = O-(5'-uridylyl)-L-seryl-[protein] + diphosphate. The enzyme catalyses L-tyrosyl-[protein] + UTP = O-(5'-uridylyl)-L-tyrosyl-[protein] + diphosphate. Nucleotidyltransferase involved in the post-translational modification of proteins. It can catalyze the addition of adenosine monophosphate (AMP) or uridine monophosphate (UMP) to a protein, resulting in modifications known as AMPylation and UMPylation. This chain is Protein nucleotidyltransferase YdiU, found in Mycolicibacterium paratuberculosis (strain ATCC BAA-968 / K-10) (Mycobacterium paratuberculosis).